The following is a 332-amino-acid chain: D-alanine--D-alanine ligase (332 aa).

Residues Lys-124–Asn-329 form the ATP-grasp domain. Ala-154 to Glu-209 lines the ATP pocket. Mg(2+)-binding residues include Asp-283, Glu-296, and Asn-298.

Belongs to the D-alanine--D-alanine ligase family. The cofactor is Mg(2+). Mn(2+) is required as a cofactor.

Its subcellular location is the cytoplasm. The catalysed reaction is 2 D-alanine + ATP = D-alanyl-D-alanine + ADP + phosphate + H(+). The protein operates within cell wall biogenesis; peptidoglycan biosynthesis. In terms of biological role, cell wall formation. This is D-alanine--D-alanine ligase from Shewanella piezotolerans (strain WP3 / JCM 13877).